A 328-amino-acid chain; its full sequence is Biotin synthase (328 aa).

The 226-residue stretch at 42–267 (YHVQLASLLS…LMPGSRVRLS (226 aa)) folds into the Radical SAM core domain. [4Fe-4S] cluster-binding residues include Cys-57, Cys-61, and Cys-64. Residues Cys-101, Cys-133, Cys-193, and Arg-265 each contribute to the [2Fe-2S] cluster site.

The protein belongs to the radical SAM superfamily. Biotin synthase family. In terms of assembly, homodimer. The cofactor is [4Fe-4S] cluster. It depends on [2Fe-2S] cluster as a cofactor.

It catalyses the reaction (4R,5S)-dethiobiotin + (sulfur carrier)-SH + 2 reduced [2Fe-2S]-[ferredoxin] + 2 S-adenosyl-L-methionine = (sulfur carrier)-H + biotin + 2 5'-deoxyadenosine + 2 L-methionine + 2 oxidized [2Fe-2S]-[ferredoxin]. It participates in cofactor biosynthesis; biotin biosynthesis; biotin from 7,8-diaminononanoate: step 2/2. In terms of biological role, catalyzes the conversion of dethiobiotin (DTB) to biotin by the insertion of a sulfur atom into dethiobiotin via a radical-based mechanism. The chain is Biotin synthase from Synechococcus sp. (strain CC9311).